The primary structure comprises 1712 residues: Collagen alpha-2(IV) chain (1712 aa).

Residues 1 to 25 (MGRDQRAVAGPALRRWLLLGTVTVG) form the signal peptide. A propeptide spans 26 to 183 (FLAQSVLAGV…LPKEERDRYR (158 aa)) (N-terminal propeptide (7S domain)). Disordered stretches follow at residues 60-237 (RGQP…GFYG), 302-448 (GLRG…PDGF), 507-640 (INGE…DAGL), 690-906 (GLPG…SPGF), and 1157-1480 (TGPP…GLPG). Low complexity predominate over residues 68–84 (PQGYNGPPGLQGFPGLQ). Positions 121–130 (GHPGQGGPRG) are enriched in gly residues. An N-linked (GlcNAc...) asparagine glycan is attached at Asn-138. Positions 140 to 153 (TQGDSGPQGPPGSE) are enriched in low complexity. Residues 175–186 (PKEERDRYRGEP) show a composition bias toward basic and acidic residues. Positions 184-1484 (GEPGEPGLVG…SPGLPGMPGR (1301 aa)) are triple-helical region. Composition is skewed to pro residues over residues 215–224 (RPGPPGPPGP) and 433–445 (PPGP…PPGP). Basic and acidic residues-rich tracts occupy residues 511-520 (PGRKGDRGDP) and 571-582 (KGDDGSPGRDGL). 2 stretches are compositionally biased toward low complexity: residues 628–640 (LKGQ…DAGL) and 698–710 (TGAK…PGFA). Gly residues predominate over residues 711–720 (GADGGPGPRG). A compositionally biased stretch (low complexity) spans 721–730 (LPGDAGREGF). The span at 752–766 (DGSPGPIGLPGPDGP) shows a compositional bias: pro residues. 5 stretches are compositionally biased toward low complexity: residues 769 to 778 (ERGLPGEVLG), 813 to 823 (MPGMPGLKGQP), 831 to 844 (QPGL…HGFP), 1302 to 1328 (GSAA…KGWA), and 1400 to 1421 (QPGT…EMGP). The region spanning 1489-1712 (GYLLVKHSQT…SRCQVCMKNL (224 aa)) is the Collagen IV NC1 domain. 3'-bromotyrosine is present on Tyr-1490. Cystine bridges form between Cys-1504-Cys-1593, Cys-1537-Cys-1590, Cys-1549-Cys-1555, Cys-1612-Cys-1708, Cys-1646-Cys-1705, and Cys-1658-Cys-1665.

It belongs to the type IV collagen family. In terms of assembly, there are six type IV collagen isoforms, alpha 1(IV)-alpha 6(IV), each of which can form a triple helix structure with 2 other chains to generate type IV collagen network. Interacts with EFEMP2. In terms of processing, prolines at the third position of the tripeptide repeating unit (G-X-Y) are hydroxylated in some or all of the chains. Post-translationally, type IV collagens contain numerous cysteine residues which are involved in inter- and intramolecular disulfide bonding. 12 of these, located in the NC1 domain, are conserved in all known type IV collagens. The trimeric structure of the NC1 domains is stabilized by covalent bonds between Lys and Met residues. In terms of processing, proteolytic processing produces the C-terminal NC1 peptide, canstatin.

The protein localises to the secreted. The protein resides in the extracellular space. Its subcellular location is the extracellular matrix. It localises to the basement membrane. Its function is as follows. Type IV collagen is the major structural component of glomerular basement membranes (GBM), forming a 'chicken-wire' meshwork together with laminins, proteoglycans and entactin/nidogen. In terms of biological role, canstatin, a cleavage product corresponding to the collagen alpha 2(IV) NC1 domain, possesses both anti-angiogenic and anti-tumor cell activity. It inhibits proliferation and migration of endothelial cells, reduces mitochondrial membrane potential, and induces apoptosis. Specifically induces Fas-dependent apoptosis and activates procaspase-8 and -9 activity. Ligand for alphavbeta3 and alphavbeta5 integrins. The sequence is that of Collagen alpha-2(IV) chain from Homo sapiens (Human).